The chain runs to 478 residues: Alpha-1,3-mannosyl-glycoprotein 4-beta-N-acetylglucosaminyltransferase C (478 aa).

Topologically, residues M1–T25 are cytoplasmic. A helical; Signal-anchor for type II membrane protein transmembrane segment spans residues V26 to I43. Topologically, residues E44–S478 are lumenal. N-linked (GlcNAc...) asparagine glycans are attached at residues N84 and N215.

Belongs to the glycosyltransferase 54 family. A divalent metal cation serves as cofactor.

The protein resides in the golgi apparatus membrane. It catalyses the reaction N(4)-{beta-D-GlcNAc-(1-&gt;2)-alpha-D-Man-(1-&gt;3)-[beta-D-GlcNAc-(1-&gt;2)-alpha-D-Man-(1-&gt;6)]-beta-D-Man-(1-&gt;4)-beta-D-GlcNAc-(1-&gt;4)-beta-D-GlcNAc}-L-asparaginyl-[protein] + UDP-N-acetyl-alpha-D-glucosamine = N(4)-{beta-D-GlcNAc-(1-&gt;2)-[beta-D-GlcNAc-(1-&gt;4)]-alpha-D-Man-(1-&gt;3)-[beta-D-GlcNAc-(1-&gt;2)-alpha-D-Man-(1-&gt;6)]-beta-D-Man-(1-&gt;4)-beta-D-GlcNAc-(1-&gt;4)-beta-D-GlcNAc}-L-asparaginyl-[protein] + UDP + H(+). Its pathway is protein modification; protein glycosylation. Its function is as follows. Glycosyltransferase that participates in the transfer of N-acetylglucosamine (GlcNAc) to the core mannose residues of N-linked glycans. Catalyzes the formation of the GlcNAcbeta1-4 branch on the GlcNAcbeta1-2Manalpha1-3 arm of the core structure of N-linked glycans. Essential for the production of tri- and tetra-antennary N-linked sugar chains. Does not catalyze the transfer of GlcNAc to the Manalpha1-6 arm to form GlcNAcBeta1-4Manalpha1-6 linkage ('GnT-VI' activity). In Mus musculus (Mouse), this protein is Alpha-1,3-mannosyl-glycoprotein 4-beta-N-acetylglucosaminyltransferase C (Mgat4c).